Here is a 97-residue protein sequence, read N- to C-terminus: Aspartyl/glutamyl-tRNA(Asn/Gln) amidotransferase subunit C (97 aa).

Belongs to the GatC family. As to quaternary structure, heterotrimer of A, B and C subunits.

It catalyses the reaction L-glutamyl-tRNA(Gln) + L-glutamine + ATP + H2O = L-glutaminyl-tRNA(Gln) + L-glutamate + ADP + phosphate + H(+). The catalysed reaction is L-aspartyl-tRNA(Asn) + L-glutamine + ATP + H2O = L-asparaginyl-tRNA(Asn) + L-glutamate + ADP + phosphate + 2 H(+). In terms of biological role, allows the formation of correctly charged Asn-tRNA(Asn) or Gln-tRNA(Gln) through the transamidation of misacylated Asp-tRNA(Asn) or Glu-tRNA(Gln) in organisms which lack either or both of asparaginyl-tRNA or glutaminyl-tRNA synthetases. The reaction takes place in the presence of glutamine and ATP through an activated phospho-Asp-tRNA(Asn) or phospho-Glu-tRNA(Gln). The chain is Aspartyl/glutamyl-tRNA(Asn/Gln) amidotransferase subunit C from Picosynechococcus sp. (strain ATCC 27264 / PCC 7002 / PR-6) (Agmenellum quadruplicatum).